The following is a 352-amino-acid chain: Glycerol-1-phosphate dehydrogenase [NAD(P)+] (352 aa).

Residues 99-103 (GKSID) and 121-124 (TVAS) each bind NAD(+). Position 126 (Asp-126) interacts with substrate. Ser-130 contributes to the NAD(+) binding site. Substrate is bound at residue Asp-173. Zn(2+) is bound by residues Asp-173 and His-253. Substrate is bound at residue His-257. Zn(2+) is bound at residue His-269.

This sequence belongs to the glycerol-1-phosphate dehydrogenase family. As to quaternary structure, homodimer. The cofactor is Zn(2+).

It is found in the cytoplasm. The catalysed reaction is sn-glycerol 1-phosphate + NAD(+) = dihydroxyacetone phosphate + NADH + H(+). It carries out the reaction sn-glycerol 1-phosphate + NADP(+) = dihydroxyacetone phosphate + NADPH + H(+). It functions in the pathway membrane lipid metabolism; glycerophospholipid metabolism. Its activity is regulated as follows. Totally inhibited by EDTA in vitro. Catalyzes the NAD(P)H-dependent reduction of dihydroxyacetonephosphate (DHAP or glycerone phosphate) to glycerol 1-phosphate (G1P). The G1P thus generated is used as the glycerophosphate backbone of phospholipids in the cellular membranes of Archaea. Is also able to catalyze the reverse reaction, i.e. the NAD(+)-dependent oxidation of G1P but not of G3P. Is not active toward glycerol, dihydroxyacetone, glyceraldehyde phosphate, and glycerol-2-phosphate. The chain is Glycerol-1-phosphate dehydrogenase [NAD(P)+] (egsA) from Aeropyrum pernix (strain ATCC 700893 / DSM 11879 / JCM 9820 / NBRC 100138 / K1).